The sequence spans 391 residues: Pectin acetylesterase 7 (391 aa).

The N-terminal stretch at 1 to 23 is a signal peptide; that stretch reads MGRLKQCWSSLLVLAVLVIGTGA. Residues serine 171, aspartate 267, and histidine 334 each act as charge relay system in the active site.

This sequence belongs to the pectinacetylesterase family.

The protein resides in the secreted. Its subcellular location is the cell wall. Functionally, hydrolyzes acetyl esters in homogalacturonan regions of pectin. In type I primary cell wall, galacturonic acid residues of pectin can be acetylated at the O-2 and O-3 positions. Decreasing the degree of acetylation of pectin gels in vitro alters their physical properties. The protein is Pectin acetylesterase 7 of Arabidopsis thaliana (Mouse-ear cress).